The primary structure comprises 612 residues: Elongation factor 4 (612 aa).

The 183-residue stretch at 11-193 folds into the tr-type G domain; it reads KHIRNFSIVA…EIVKKVPAPD (183 aa). GTP contacts are provided by residues 23–28 and 140–143; these read DHGKST and NKID.

The protein belongs to the TRAFAC class translation factor GTPase superfamily. Classic translation factor GTPase family. LepA subfamily.

It is found in the cell membrane. The enzyme catalyses GTP + H2O = GDP + phosphate + H(+). Functionally, required for accurate and efficient protein synthesis under certain stress conditions. May act as a fidelity factor of the translation reaction, by catalyzing a one-codon backward translocation of tRNAs on improperly translocated ribosomes. Back-translocation proceeds from a post-translocation (POST) complex to a pre-translocation (PRE) complex, thus giving elongation factor G a second chance to translocate the tRNAs correctly. Binds to ribosomes in a GTP-dependent manner. The sequence is that of Elongation factor 4 from Lactobacillus johnsonii (strain CNCM I-12250 / La1 / NCC 533).